The following is a 114-amino-acid chain: Class I hydrophobin SC16 (114 aa).

Positions 1–17 (MRFFATLVLALPALAMA) are cleaved as a signal peptide. Cystine bridges form between C33–C93, C40–C87, C41–C74, and C94–C107. Residue N42 is glycosylated (N-linked (GlcNAc...) asparagine).

Belongs to the fungal hydrophobin family. As to quaternary structure, self-assembles to form functional amyloid fibrils called rodlets. Self-assembly into fibrillar rodlets occurs spontaneously at hydrophobic:hydrophilic interfaces and the rodlets further associate laterally to form amphipathic monolayers.

It is found in the secreted. Its subcellular location is the cell wall. Aerial growth, conidiation, and dispersal of filamentous fungi in the environment rely upon a capability of their secreting small amphipathic proteins called hydrophobins (HPBs) with low sequence identity. Class I can self-assemble into an outermost layer of rodlet bundles on aerial cell surfaces, conferring cellular hydrophobicity that supports fungal growth, development and dispersal; whereas Class II form highly ordered films at water-air interfaces through intermolecular interactions but contribute nothing to the rodlet structure. This chain is Class I hydrophobin SC16, found in Schizophyllum commune (strain H4-8 / FGSC 9210) (Split gill fungus).